We begin with the raw amino-acid sequence, 244 residues long: Phosphoadenosine 5'-phosphosulfate reductase (244 aa).

Cys-239 functions as the Nucleophile; cysteine thiosulfonate intermediate in the catalytic mechanism.

It belongs to the PAPS reductase family. CysH subfamily.

It localises to the cytoplasm. It carries out the reaction [thioredoxin]-disulfide + sulfite + adenosine 3',5'-bisphosphate + 2 H(+) = [thioredoxin]-dithiol + 3'-phosphoadenylyl sulfate. Its pathway is sulfur metabolism; hydrogen sulfide biosynthesis; sulfite from sulfate: step 3/3. Functionally, catalyzes the formation of sulfite from phosphoadenosine 5'-phosphosulfate (PAPS) using thioredoxin as an electron donor. In Buchnera aphidicola subsp. Acyrthosiphon pisum (strain 5A), this protein is Phosphoadenosine 5'-phosphosulfate reductase.